A 276-amino-acid polypeptide reads, in one-letter code: Undecaprenyl-diphosphatase (276 aa).

7 consecutive transmembrane segments (helical) span residues 12 to 34 (LGIV…IVVG), 43 to 63 (TATA…MWEF), 85 to 105 (FNLL…ADLI), 108 to 128 (WLFN…IMLW), 185 to 205 (TEFS…YSLF), 218 to 238 (IFAI…RALL), and 249 to 269 (FAWY…LHLI).

This sequence belongs to the UppP family.

It is found in the cell inner membrane. The catalysed reaction is di-trans,octa-cis-undecaprenyl diphosphate + H2O = di-trans,octa-cis-undecaprenyl phosphate + phosphate + H(+). In terms of biological role, catalyzes the dephosphorylation of undecaprenyl diphosphate (UPP). Confers resistance to bacitracin. In Ectopseudomonas mendocina (strain ymp) (Pseudomonas mendocina), this protein is Undecaprenyl-diphosphatase.